The following is a 118-amino-acid chain: Large ribosomal subunit protein uL18 (118 aa).

The segment at 1-20 (MISKPDKNKKRQRRHARVRS) is disordered. Positions 7 to 20 (KNKKRQRRHARVRS) are enriched in basic residues.

This sequence belongs to the universal ribosomal protein uL18 family. Part of the 50S ribosomal subunit; part of the 5S rRNA/L5/L18/L25 subcomplex. Contacts the 5S and 23S rRNAs.

Its function is as follows. This is one of the proteins that bind and probably mediate the attachment of the 5S RNA into the large ribosomal subunit, where it forms part of the central protuberance. This is Large ribosomal subunit protein uL18 from Pediococcus pentosaceus (strain ATCC 25745 / CCUG 21536 / LMG 10740 / 183-1w).